A 701-amino-acid polypeptide reads, in one-letter code: MSGRRKGCSAATASSSSSSPPSRLPPLPGHARRPRRKRCLVPEVFCTRDLADLCVRRDYEGLRRYLRRFEGSCVSLGWPSQCIYVVGGEHSPHSLTEIDLEHCQNDFFGEFRALHLIGTVSHATCRYQVFVDAYGAVFAYDAQEDCLYELASDLAGFFAKGMIRCDPVHESICARLQPNVPLVHPDHRAELCRRSRASARGRYLRSLLAFRELLACEDTAARCAYVEAHREAQLTLIWPEKHSLVLRTARDLGLSASMLRRFQRSLYTREPVMPLGEIEGAEDKTFFHRVRILCGDTGTVYAALVGQDKLVRLARDLRGFVRVGLALLIDDFRYESIGPVDRSSLYEANPELRLPFKKRRLVVGYFDSLSSLYLRGQPKFSSIWRGLRDAWTHKRPKPRERASGVHLQRYVRATAGRWLPLCWPPLHGIMLGDTQYFGVVRDHKTYRRFSCLRQAGRLYFIGLVSVYECVPDANTAPEIWVSGHGHAFAYLPGEDKVYVLGLSFGEFFENGLFAVYSFFERDYVDEIVEGAWFKHTFAGMYELSQILHDRANLLRVCQLHAGSKIRLGGSPACTFTFGSWNVAEADEANNFVIGVLEQAHFVVIGWMEPVNKAVFMDAHGGIHVLLYGTMLVKLAETLRGFIRQGSFWFRCPRRFCFSPLDSSATVAAKPVSSHTSPAYDVSEYVFSGRSVLDSVSGTGAS.

Residues 1 to 33 (MSGRRKGCSAATASSSSSSPPSRLPPLPGHARR) form a disordered region.

It belongs to the herpesviridae US22 family. Interacts with UL38 and host HDAC1; these interactions are necessary for the HDAC1 interaction with UL38. Interacts with host MTA2.

The protein localises to the virion. The protein resides in the host nucleus. It localises to the host cytoplasm. In terms of biological role, contributes to activation of immediate-early gene expression. This Homo sapiens (Human) protein is Protein UL29/UL28 (UL29).